A 208-amino-acid polypeptide reads, in one-letter code: Elongation factor Ts, chloroplastic (208 aa).

This sequence belongs to the EF-Ts family.

The protein localises to the plastid. The protein resides in the chloroplast. In terms of biological role, associates with the EF-Tu.GDP complex and induces the exchange of GDP to GTP. It remains bound to the aminoacyl-tRNA.EF-Tu.GTP complex up to the GTP hydrolysis stage on the ribosome. The chain is Elongation factor Ts, chloroplastic (tsf) from Cyanidium caldarium (Red alga).